We begin with the raw amino-acid sequence, 44 residues long: Photosystem I reaction center subunit IX (44 aa).

A helical membrane pass occupies residues 7 to 27 (YLSTAPVLATLWFGSLAGLLI).

The protein belongs to the PsaJ family.

The protein localises to the plastid. Its subcellular location is the chloroplast thylakoid membrane. In terms of biological role, may help in the organization of the PsaE and PsaF subunits. The sequence is that of Photosystem I reaction center subunit IX from Calycanthus floridus var. glaucus (Eastern sweetshrub).